The sequence spans 293 residues: Histamine N-methyltransferase A (293 aa).

Position 28 (Glu28) interacts with substrate. Residues Gly60, Glu89, Gln94, Ser120, and Ile142 each contribute to the S-adenosyl-L-methionine site. Asn283 lines the substrate pocket.

The protein belongs to the class I-like SAM-binding methyltransferase superfamily. HNMT family. Monomer.

It is found in the cytoplasm. It carries out the reaction histamine + S-adenosyl-L-methionine = N(tau)-methylhistamine + S-adenosyl-L-homocysteine + H(+). Its function is as follows. Inactivates histamine by N-methylation. Plays an important role in degrading histamine and in regulating the airway response to histamine. The chain is Histamine N-methyltransferase A (hnmt-a) from Xenopus laevis (African clawed frog).